Consider the following 456-residue polypeptide: Maturase-like protein 1 (456 aa).

It to group II intron maturases.

It is found in the plastid. Could be required for group III intron excision. The chain is Maturase-like protein 1 (mat1) from Euglena longa (Euglenophycean alga).